The primary structure comprises 62 residues: Defensin BmKDfsin5 (62 aa).

The signal sequence occupies residues 1–24 (MKVIALFFLFAFIFCTLEVAIVEA). Disulfide bonds link Cys-28-Cys-49, Cys-35-Cys-57, and Cys-39-Cys-59.

It belongs to the invertebrate defensin family. Type 2 subfamily. Highly expressed in non-venom gland (hemolymph) and moderately expressed in venom gland.

It localises to the secreted. Its function is as follows. Antibacterial peptide active against Gram-positive bacteria (including S.aureus ATCC25923 (MIC=2.5 uM), M.luteus AB93113 (MIC=2.5 uM), and the antibiotic-resistant S.epidermidis PRSE P1389 (MIC=1.25 uM)), but not against Gram-negative bacteria (including E.coli and P.aeruginosa). Also has weak blocking activity on Kv1.1/KCNA1 (8.7% inhibition), Kv1.2/KCNA2 (10.2% inhibition), Kv1.3/KCNA3 (9.0% inhibition), KCa3.1/KCNN4/IK (9.1% inhibition), KCa2.3/KCNN3/SK3 (46.3% inhibition) and Kv11.1/KCNH2/ERG1 (16.9% inhibition) channels (tested at 1 uM). It inhibits potassium channel current by interacting with the pore region. The protein is Defensin BmKDfsin5 of Olivierus martensii (Manchurian scorpion).